A 182-amino-acid polypeptide reads, in one-letter code: Large ribosomal subunit protein uL6 (182 aa).

This sequence belongs to the universal ribosomal protein uL6 family. Part of the 50S ribosomal subunit.

In terms of biological role, this protein binds to the 23S rRNA, and is important in its secondary structure. It is located near the subunit interface in the base of the L7/L12 stalk, and near the tRNA binding site of the peptidyltransferase center. In Caldicellulosiruptor bescii (strain ATCC BAA-1888 / DSM 6725 / KCTC 15123 / Z-1320) (Anaerocellum thermophilum), this protein is Large ribosomal subunit protein uL6.